The chain runs to 221 residues: Ribosomal RNA large subunit methyltransferase E (221 aa).

Residues Gly72, Trp74, Asp91, Asp107, and Asp131 each contribute to the S-adenosyl-L-methionine site. The Proton acceptor role is filled by Lys171.

It belongs to the class I-like SAM-binding methyltransferase superfamily. RNA methyltransferase RlmE family.

It is found in the cytoplasm. It carries out the reaction uridine(2552) in 23S rRNA + S-adenosyl-L-methionine = 2'-O-methyluridine(2552) in 23S rRNA + S-adenosyl-L-homocysteine + H(+). Specifically methylates the uridine in position 2552 of 23S rRNA at the 2'-O position of the ribose in the fully assembled 50S ribosomal subunit. This chain is Ribosomal RNA large subunit methyltransferase E, found in Zymomonas mobilis subsp. mobilis (strain ATCC 31821 / ZM4 / CP4).